Consider the following 277-residue polypeptide: MTDTRDHIISQLSVVPSIEPAAEVEARVQFLVDYLRVSHARGYVLGISGGQDSTIAGRLAQLAVERIRREDGSDHQFVGVRLPHGLQADEDDALVALDFIQPDRSISINIREATDVLSAATAAALGIDELGDFNKGNVKARQRMVAQYAIAGELGLLVVGTDHAAENVTGFFTKYGDGAADVLPLAGLTKRQGALLLQHLGAPESTWTKVPTADLEEDRPALPDEEALGVTYREIDTYLENSGEVSPEAAARIEHLWKVGQHKRHMPVTPQDQWWRQ.

Residue 46–53 (GISGGQDS) coordinates ATP. D52 provides a ligand contact to Mg(2+). R141 provides a ligand contact to deamido-NAD(+). Position 161 (T161) interacts with ATP. E166 is a binding site for Mg(2+). Positions 174 and 181 each coordinate deamido-NAD(+). The ATP site is built by K190 and T212. 262 to 263 (HK) contacts deamido-NAD(+).

This sequence belongs to the NAD synthetase family. As to quaternary structure, homodimer.

The catalysed reaction is deamido-NAD(+) + NH4(+) + ATP = AMP + diphosphate + NAD(+) + H(+). Its pathway is cofactor biosynthesis; NAD(+) biosynthesis; NAD(+) from deamido-NAD(+) (ammonia route): step 1/1. In terms of biological role, catalyzes the ATP-dependent amidation of deamido-NAD to form NAD. Uses ammonia as a nitrogen source. The protein is NH(3)-dependent NAD(+) synthetase of Corynebacterium efficiens (strain DSM 44549 / YS-314 / AJ 12310 / JCM 11189 / NBRC 100395).